The sequence spans 167 residues: uncharacterized protein (167 aa).

The stretch at 28-59 (LTGIREELKADIDETRLIAESVLEEKEKKVVE) forms a coiled coil.

This is an uncharacterized protein from Aquifex aeolicus (strain VF5).